The chain runs to 445 residues: Hydroxymethylglutaryl-CoA synthase (445 aa).

(3S)-3-hydroxy-3-methylglutaryl-CoA is bound at residue D31. The Proton donor/acceptor role is filled by E83. 7 residues coordinate (3S)-3-hydroxy-3-methylglutaryl-CoA: C120, T163, S211, H244, K253, N328, and S364. The active-site Acyl-thioester intermediate is the C120. H244 acts as the Proton donor/acceptor in catalysis.

Belongs to the thiolase-like superfamily. HMG-CoA synthase family.

It carries out the reaction acetoacetyl-CoA + acetyl-CoA + H2O = (3S)-3-hydroxy-3-methylglutaryl-CoA + CoA + H(+). Its pathway is metabolic intermediate biosynthesis; (R)-mevalonate biosynthesis; (R)-mevalonate from acetyl-CoA: step 2/3. In contrast to bacterial and eukaryotic HMG-CoA synthases, is insensitive to feedback substrate inhibition by acetoacetyl-CoA. Enzymatic activity is inhibited by hymeglusin, which also blocks the propagation of H.volcanii cells in vivo, indicating the critical role that the mevalonate pathway plays in isoprenoid biosynthesis by these archaea. Functionally, catalyzes the condensation of acetyl-CoA with acetoacetyl-CoA to form 3-hydroxy-3-methylglutaryl-CoA (HMG-CoA). Functions in the mevalonate (MVA) pathway leading to isopentenyl diphosphate (IPP), a key precursor for the biosynthesis of isoprenoid compounds such as archaeal membrane lipids. This chain is Hydroxymethylglutaryl-CoA synthase (hmgB), found in Haloferax volcanii (strain ATCC 29605 / DSM 3757 / JCM 8879 / NBRC 14742 / NCIMB 2012 / VKM B-1768 / DS2) (Halobacterium volcanii).